A 543-amino-acid polypeptide reads, in one-letter code: Cysteine/serine-rich nuclear protein 2 (543 aa).

M1 bears the N-acetylmethionine mark. Disordered stretches follow at residues 1–51 (MDAF…SFTP), 281–305 (KRQVSRPAAPDEEPSPTASCSLTGA), and 488–543 (DCNP…PLAV). Residues 31 to 40 (SSDSADSCDS) show a composition bias toward low complexity. Polar residues-rich tracts occupy residues 42-51 (NPPTTASFTP) and 296-305 (PTASCSLTGA).

The protein belongs to the AXUD1 family.

It localises to the nucleus. Its function is as follows. Binds to the consensus sequence 5'-AGAGTG-3' and has transcriptional activator activity. May play a role in apoptosis. The protein is Cysteine/serine-rich nuclear protein 2 (CSRNP2) of Homo sapiens (Human).